A 421-amino-acid polypeptide reads, in one-letter code: MESLKRWNEERGLWCEKGVQVLLTTIGAFAAFGLMTIAISTDYWLYTRALICNTTNLTAGDDGPPHRGGSGSSEKKDPGGLTHSGLWRICCLEGLKRGVCVKINHFPEDTDYDHDSAEYLLRVVRASSIFPILSAILLLLGGVCVAASRVYKSKRNIILGAGILFVAAGLSNIIGVIVYISANAGEPGPKRDEEKKNHYSYGWSFYFGGLSFILAEVIGVLAVNIYIERSREAHCQSRSDLLKAGGGAGGSGGSGPSAILRLPSYRFRYRRRSRSSSRGSSEASPSRDASPGGPGGPGFASTDISMYTLSRDPSKGSVAAGLASAGGGGGGAGVGAYGGAAGAAGGGGTGSERDRGSSAGFLTLHNAFPKEAASGVTVTVTGPPAAPAPAPPAPAAPAPGTLSKEAAASNTNTLNRKTTPV.

The next 4 membrane-spanning stretches (helical) occupy residues 19–39 (VQVL…TIAI), 127–147 (SSIF…CVAA), 157–177 (IILG…IGVI), and 207–227 (FGGL…NIYI). 2 positions are modified to phosphoserine: S251 and S254. Positions 271 to 304 (RRSRSSSRGSSEASPSRDASPGGPGGPGFASTDI) are disordered. Positions 276 to 287 (SSRGSSEASPSR) are enriched in low complexity. The chain crosses the membrane as a helical span at residues 318–338 (VAAGLASAGGGGGGAGVGAYG). Disordered stretches follow at residues 342–363 (GAAG…GFLT) and 378–421 (VTVT…TTPV). Over residues 384 to 397 (PAAPAPAPPAPAAP) the composition is skewed to pro residues. Residues 408 to 421 (ASNTNTLNRKTTPV) show a composition bias toward polar residues.

The protein belongs to the PMP-22/EMP/MP20 family. CACNG subfamily. As to quaternary structure, interacts with CACNA1C. Identified in a complex with the L-type calcium channel subunits CACNA1C, CACNA2D1 and either CACNB1 or CACNB2. Acts as an auxiliary subunit for AMPA-selective glutamate receptors (AMPARs). Found in a complex with GRIA1, GRIA2, GRIA3, GRIA4, CNIH2, CNIH3, CACNG2, CACNG3, CACNG4, CACNG5 and CACNG7. Interacts with CNIH2. Found in a complex with GRIA1, GRIA2, GRIA3, GRIA4, DLG4 and CNIH2. Palmitoylated. Probably palmitoylated by ZDHHC3 and ZDHHC7.

The protein localises to the cell membrane. It localises to the postsynaptic density membrane. Its function is as follows. Regulates the activity of L-type calcium channels that contain CACNA1C as pore-forming subunit. Regulates the trafficking and gating properties of AMPA-selective glutamate receptors (AMPARs). Promotes their targeting to the cell membrane and synapses and modulates their gating properties by slowing their rates of activation, deactivation and desensitization and by mediating their resensitization. Does not show subunit-specific AMPA receptor regulation and regulates all AMPAR subunits. Thought to stabilize the calcium channel in an inactivated (closed) state. This is Voltage-dependent calcium channel gamma-8 subunit from Rattus norvegicus (Rat).